Consider the following 682-residue polypeptide: Epithelial sodium channel subunit alpha (682 aa).

At 1–111 (MLMRLLPLPS…CSKHNRMKTA (111 aa)) the chain is on the cytoplasmic side. The segment at 34-69 (AQGPLPPQPLQGPLKGDKCEQPGLGPEPTAPQQHTE) is disordered. The chain crosses the membrane as a helical span at residues 112–132 (FWAVLWLCTFGMMYWQFALLF). Topologically, residues 133-586 (GEYFSYPVSL…SQWSLWFGSS (454 aa)) are extracellular. 10 disulfide bridges follow: cysteine 159–cysteine 329, cysteine 253–cysteine 260, cysteine 306–cysteine 313, cysteine 418–cysteine 503, cysteine 440–cysteine 480, cysteine 440–cysteine 499, cysteine 444–cysteine 495, cysteine 453–cysteine 480, cysteine 453–cysteine 503, and cysteine 455–cysteine 469. Residue asparagine 191 is glycosylated (N-linked (GlcNAc...) asparagine). Positions 201–267 (RSRRSLADTL…SDCFYQTSSS (67 aa)) are gating release of inhibition by proteolysis (GRIP); protease-sensitive region that is responsible for the proteolytic activation of the channel. Residues 221–240 (PEPRRARSSDPSSVRDNNPR) are disordered. Asparagine 504 carries N-linked (GlcNAc...) asparagine glycosylation. The chain crosses the membrane as a helical span at residues 587–607 (VLSVVEMAEFMFDLLVITLLM). At 608 to 682 (LLRRFRSRYW…SSAACAPREP (75 aa)) the chain is on the cytoplasmic side. The short motif at 653 to 657 (PPPAY) is the PY motif; recruits WW domain-containing proteins and is thereby required for ubiquitination and inhibition of the channel by NEDD4 and NEDD4L element.

It belongs to the amiloride-sensitive sodium channel (TC 1.A.6) family. SCNN1A subfamily. Heterotrimer; containing an alpha/SCNN1A, a beta/SCNN1B and a gamma/SCNN1G subunit. Interacts with WWP1 (via WW domains). Interacts with WWP2 (via WW domains); inhibits the channel. Interacts with BPIFA1; the interaction is indirect via SCNN1B and inhibits the proteolytic processing of SCNN1A and SCNN1G and the activation of ENaC. Interacts with the full-length immature form of PCSK9 (pro-PCSK9). Ubiquitinated. Can be ubiquitinated at multiple sites and undergo monoubiquitination and polyubiquitination. Ubiquitination by NEDD4 or NEDD4L inhibits the ENaC channel through endocytosis, intracellular retention and degradation of its individual subunits. Post-translationally, N-glycosylated. In terms of processing, ENaC is activated through the proteolytic maturation of its subunits. Furin cleaves the SCNN1A subunit, which results in a stepwise increase in the open probability of the channel due to the release of an inhibitory tract. BPIFA1, which is recruited by the SCNN1B subunit, prevents the proteolytic activation of ENaC.

The protein localises to the apical cell membrane. The protein resides in the cell projection. It localises to the cilium. It is found in the cytoplasmic granule. Its subcellular location is the cytoplasm. The protein localises to the cytoplasmic vesicle. The protein resides in the secretory vesicle. It localises to the acrosome. It is found in the flagellum. It catalyses the reaction Na(+)(in) = Na(+)(out). With respect to regulation, originally identified and characterized by its inhibition by the diuretic drug amiloride. This is one of the three pore-forming subunits of the heterotrimeric epithelial sodium channel (ENaC), a critical regulator of sodium balance and fluid homeostasis. ENaC operates in epithelial tissues, where it mediates the electrodiffusion of sodium ions from extracellular fluid through the apical membrane of cells, with water following osmotically. It plays a key role in maintaining sodium homeostasis through electrogenic sodium reabsorption in the kidneys. Additionally, ENaC is essential for airway surface liquid homeostasis, which is crucial for proper mucus clearance. The protein is Epithelial sodium channel subunit alpha of Cavia porcellus (Guinea pig).